The sequence spans 246 residues: uncharacterized protein (246 aa).

It belongs to the IIV-6 170L family.

This is an uncharacterized protein from Acheta domesticus (House cricket).